Here is a 217-residue protein sequence, read N- to C-terminus: Germin-like protein subfamily 1 member 1 (217 aa).

Residues 1–18 (MILNILLTLTLLMGRVKS) form the signal peptide. The cysteines at positions 27 and 45 are disulfide-linked. The Cupin type-1 domain occupies 59–209 (SALSRPGNTK…AYDINGQDVA (151 aa)). Asparagine 75 carries an N-linked (GlcNAc...) asparagine glycan. The Mn(2+) site is built by histidine 108, histidine 110, glutamate 115, and histidine 154.

The protein belongs to the germin family. In terms of assembly, oligomer (believed to be a pentamer but probably hexamer).

It is found in the secreted. The protein localises to the extracellular space. It localises to the apoplast. Its function is as follows. May play a role in plant defense. Probably has no oxalate oxidase activity even if the active site is conserved. This Arabidopsis thaliana (Mouse-ear cress) protein is Germin-like protein subfamily 1 member 1 (GLP7).